A 258-amino-acid chain; its full sequence is Acyl-[acyl-carrier-protein]--UDP-N-acetylglucosamine O-acyltransferase (258 aa).

The protein belongs to the transferase hexapeptide repeat family. LpxA subfamily. Homotrimer.

The protein localises to the cytoplasm. It carries out the reaction a (3R)-hydroxyacyl-[ACP] + UDP-N-acetyl-alpha-D-glucosamine = a UDP-3-O-[(3R)-3-hydroxyacyl]-N-acetyl-alpha-D-glucosamine + holo-[ACP]. It functions in the pathway glycolipid biosynthesis; lipid IV(A) biosynthesis; lipid IV(A) from (3R)-3-hydroxytetradecanoyl-[acyl-carrier-protein] and UDP-N-acetyl-alpha-D-glucosamine: step 1/6. Its function is as follows. Involved in the biosynthesis of lipid A, a phosphorylated glycolipid that anchors the lipopolysaccharide to the outer membrane of the cell. This Pseudomonas entomophila (strain L48) protein is Acyl-[acyl-carrier-protein]--UDP-N-acetylglucosamine O-acyltransferase.